The following is a 397-amino-acid chain: Lymphoid enhancer-binding factor 1 (397 aa).

The tract at residues 1-60 (MPQLSGGGGGGDPELCATDEMIPFKDEGDPQKEKIFAEISHPEEEGDLADIKSSLVNESE) is CTNNB1-binding. A Glycyl lysine isopeptide (Lys-Gly) (interchain with G-Cter in SUMO) cross-link involves residue lysine 25. A disordered region spans residues 59-102 (SEIIPASNGHEVVRQAPSSQEPYHDKAREHPDEGKHPDGGLYNK). Residues 80–96 (PYHDKAREHPDEGKHPD) show a composition bias toward basic and acidic residues. Position 130 is a phosphoserine (serine 130). The residue at position 153 (threonine 153) is a Phosphothreonine; by NLK. Serine 164 carries the post-translational modification Phosphoserine; by NLK. Disordered regions lie at residues 164–191 (SPGS…APEI) and 266–296 (VKQE…KRPH). Residue lysine 267 forms a Glycyl lysine isopeptide (Lys-Gly) (interchain with G-Cter in SUMO) linkage. Residues 267-294 (KQEHPHTDSDLMHVKPQHEQRKEQEPKR) show a composition bias toward basic and acidic residues. Residues 297-365 (IKKPLNAFML…LHMQLYPGWS (69 aa)) constitute a DNA-binding region (HMG box). Positions 367–397 (RDNYGKKKKRKREKLQESTSGTGPRMTAAYI) are disordered.

This sequence belongs to the TCF/LEF family. As to quaternary structure, binds the armadillo repeat of CTNNB1 and forms a stable complex. Binds TLE1, ALYREF/THOC4, MDFI and MDFIC. Interacts with NLK. Interacts with EP300 and PIASG. Interacts with DAZAP2. Phosphorylated at Thr-153 and/or Ser-164 by NLK. Phosphorylation by NLK at these sites represses LEF1-mediated transcriptional activation of target genes of the canonical Wnt signaling pathway. As to expression, expressed in Vgamma1.1 and Vgamma2 gamma-delta T-cells, however not expressed in gamma-delta thymocytes fated for Il17a expression (at protein level). Expressed in alpha-beta T-cell lineages. Expressed in the thymus. Found in distinct epithelial cell compartments of the skin and is abundant in the hair-producing progenitors of the follicle.

It is found in the nucleus. In terms of biological role, transcription factor that binds DNA in a sequence-specific manner. Participates in the Wnt signaling pathway. Activates transcription of target genes in the presence of CTNNB1 and EP300. PIASG antagonizes both Wnt-dependent and Wnt-independent activation by LEF1. TLE1, TLE2, TLE3 and TLE4 repress transactivation mediated by LEF1 and CTNNB1. Regulates T-cell receptor alpha enhancer function. Required for IL17A expressing gamma-delta T-cell maturation and development, via binding to regulator loci of BLK to modulate expression. Acts as a positive regulator of odontoblast differentiation during mesenchymal tooth germ formation, expression is repressed during the bell stage by MSX1-mediated inhibition of CTNNB1 signaling. May play a role in hair cell differentiation and follicle morphogenesis. The polypeptide is Lymphoid enhancer-binding factor 1 (Mus musculus (Mouse)).